Reading from the N-terminus, the 288-residue chain is 11-beta-hydroxysteroid dehydrogenase 1 (288 aa).

Residues 1–4 (MKKY) are Cytoplasmic-facing. The helical; Signal-anchor for type II membrane protein transmembrane segment at 5–20 (LLPVLVLCLGYYYSTN) threads the bilayer. Residues 21-288 (EEFRPEMLQG…SYNRDLFVSN (268 aa)) are Lumenal-facing. NADP(+)-binding positions include 37 to 63 (GASK…TARS), 88 to 89 (TM), and 115 to 117 (NHI). The N-linked (GlcNAc...) asparagine glycan is linked to Asn-158. Ser-166 lines the substrate pocket. Residue Tyr-179 is the Proton acceptor of the active site. 179–183 (YSASK) is a binding site for NADP(+). The N-linked (GlcNAc...) asparagine glycan is linked to Asn-203. Residues 212 to 218 (GFIDTET) and 214 to 218 (IDTET) each bind NADP(+).

This sequence belongs to the short-chain dehydrogenases/reductases (SDR) family. Homodimer. Post-translationally, glycosylated. As to expression, liver, kidney, lung and testis. Brain. Expressed in liver (at protein level).

Its subcellular location is the endoplasmic reticulum membrane. The catalysed reaction is an 11beta-hydroxysteroid + NADP(+) = an 11-oxosteroid + NADPH + H(+). It carries out the reaction corticosterone + NADP(+) = 11-dehydrocorticosterone + NADPH + H(+). It catalyses the reaction a 7beta-hydroxysteroid + NADP(+) = a 7-oxosteroid + NADPH + H(+). The enzyme catalyses 7-oxocholesterol + NADPH + H(+) = 7beta-hydroxycholesterol + NADP(+). The catalysed reaction is chenodeoxycholate + NADP(+) = 7-oxolithocholate + NADPH + H(+). It carries out the reaction 7-oxolithocholate + NADPH + H(+) = ursodeoxycholate + NADP(+). It catalyses the reaction glycochenodeoxycholate + NADP(+) = 7-oxoglycolithocholate + NADPH + H(+). The enzyme catalyses taurochenodeoxycholate + NADP(+) = 7-oxotaurolithocholate + NADPH + H(+). The catalysed reaction is tauroursodeoxycholate + NADP(+) = 7-oxotaurolithocholate + NADPH + H(+). It carries out the reaction glycoursodeoxycholate + NADP(+) = 7-oxoglycolithocholate + NADPH + H(+). It catalyses the reaction 7-oxopregnenolone + NADPH + H(+) = 7beta-hydroxypregnenolone + NADP(+). The enzyme catalyses 3beta,7alpha-dihydroxyandrost-5-en-17-one + NADP(+) = 3beta-hydroxy-5-androstene-7,17-dione + NADPH + H(+). The catalysed reaction is 3beta-hydroxy-5-androstene-7,17-dione + NADPH + H(+) = 3beta,7beta-dihydroxyandrost-5-en-17-one + NADP(+). It carries out the reaction 3beta-hydroxy-5alpha-androstane-7,17-dione + NADPH + H(+) = 3beta,7beta-dihydroxy-5alpha-androstan-17-one + NADP(+). In terms of biological role, controls the reversible conversion of biologically active glucocorticoids such as 11-dehydrocorticosterone to corticosterone using NADP(H). Participates in the corticosteroid receptor-mediated anti-inflammatory response, as well as metabolic and homeostatic processes. Bidirectional in vitro, predominantly functions as a reductase in vivo, thereby increasing the concentration of active glucocorticoids. It has broad substrate specificity, besides glucocorticoids, it accepts other steroid and sterol substrates. Interconverts 7-oxo- and 7-hydroxy-neurosteroids such as 7-oxopregnenolone and 7beta-hydroxypregnenolone, 7-oxodehydroepiandrosterone (3beta-hydroxy-5-androstene-7,17-dione) and 7beta-hydroxydehydroepiandrosterone (3beta,7beta-dihydroxyandrost-5-en-17-one), among others. Catalyzes the stereo-specific conversion of the major dietary oxysterol, 7-ketocholesterol (7-oxocholesterol), into the more polar 7-beta-hydroxycholesterol metabolite. 7-oxocholesterol is one of the most important oxysterols, it participates in several events such as induction of apoptosis, accumulation in atherosclerotic lesions, lipid peroxidation, and induction of foam cell formation. Mediates the 7-oxo reduction of 7-oxolithocholate mainly to chenodeoxycholate, and to a lesser extent to ursodeoxycholate, both in its free form and when conjugated to glycine or taurine, providing a link between glucocorticoid activation and bile acid metabolism. Catalyzes the synthesis of 7-beta-25-dihydroxycholesterol from 7-oxo-25-hydroxycholesterol in vitro, which acts as a ligand for the G-protein-coupled receptor (GPCR) Epstein-Barr virus-induced gene 2 (EBI2) and may thereby regulate immune cell migration. The protein is 11-beta-hydroxysteroid dehydrogenase 1 of Rattus norvegicus (Rat).